A 132-amino-acid polypeptide reads, in one-letter code: Profilin-1 (132 aa).

It belongs to the profilin family. As to quaternary structure, occurs in many kinds of cells as a complex with monomeric actin in a 1:1 ratio.

It is found in the cytoplasm. The protein localises to the cytoskeleton. Its function is as follows. Binds to actin and affects the structure of the cytoskeleton. At high concentrations, profilin prevents the polymerization of actin, whereas it enhances it at low concentrations. By binding to PIP2, it inhibits the formation of IP3 and DG. The protein is Profilin-1 (PRO1) of Parietaria judaica (Pellitory-of-the-wall).